The sequence spans 195 residues: Interferon tau (195 aa).

The N-terminal stretch at 1-23 (MAFVLSLRMALVLVSYCPGGSLG) is a signal peptide. 2 disulfides stabilise this stretch: C24-C122 and C52-C162. N-linked (GlcNAc...) asparagine glycosylation occurs at N101.

It belongs to the alpha/beta interferon family. IFN-alphaII subfamily. As to expression, constitutively and exclusively expressed in the mononuclear cells of the extraembryonic trophectoderm.

The protein localises to the secreted. Paracrine hormone primarily responsible for maternal recognition of pregnancy. Interacts with endometrial receptors, probably type I interferon receptors, and blocks estrogen receptor expression, preventing the estrogen-induced increase in oxytocin receptor expression in the endometrium. This results in the suppression of the pulsatile endometrial release of the luteolytic hormone prostaglandin F2-alpha, hindering the regression of the corpus luteum (luteolysis) and therefore a return to ovarian cyclicity. This, and a possible direct effect of IFN-tau on prostaglandin synthesis, leads in turn to continued ovarian progesterone secretion, which stimulates the secretion by the endometrium of the nutrients required for the growth of the conceptus. In summary, displays particularly high antiviral and antiproliferative potency concurrently with particular weak cytotoxicity, high antiluteolytic activity and immunomodulatory properties. In contrast with other IFNs, IFN-tau is not virally inducible. The chain is Interferon tau (IFNT) from Ovibos moschatus (Muskox).